Here is a 696-residue protein sequence, read N- to C-terminus: DNA-directed RNA polymerase subunit beta N-terminal section (696 aa).

It belongs to the RNA polymerase beta chain family. In plastids the minimal PEP RNA polymerase catalytic core is composed of four subunits: alpha, beta, beta', and beta''. When a (nuclear-encoded) sigma factor is associated with the core the holoenzyme is formed, which can initiate transcription.

The protein resides in the plastid. Its subcellular location is the chloroplast. It catalyses the reaction RNA(n) + a ribonucleoside 5'-triphosphate = RNA(n+1) + diphosphate. Its function is as follows. DNA-dependent RNA polymerase catalyzes the transcription of DNA into RNA using the four ribonucleoside triphosphates as substrates. This chain is DNA-directed RNA polymerase subunit beta N-terminal section (rpoB1), found in Stigeoclonium helveticum (Green alga).